The following is a 445-amino-acid chain: Ribosomal protein uS12 methylthiotransferase RimO (445 aa).

The 116-residue stretch at 4–119 (IKVALVSLGC…LLESIKVFLK (116 aa)) folds into the MTTase N-terminal domain. [4Fe-4S] cluster is bound by residues cysteine 13, cysteine 48, cysteine 82, cysteine 156, cysteine 160, and cysteine 163. Residues 142-372 (TTPTYTAYVR…MILQQSISKD (231 aa)) form the Radical SAM core domain. Positions 375 to 441 (KEKIGKIYEV…EYDLIGVVYN (67 aa)) constitute a TRAM domain.

It belongs to the methylthiotransferase family. RimO subfamily. It depends on [4Fe-4S] cluster as a cofactor.

Its subcellular location is the cytoplasm. It catalyses the reaction L-aspartate(89)-[ribosomal protein uS12]-hydrogen + (sulfur carrier)-SH + AH2 + 2 S-adenosyl-L-methionine = 3-methylsulfanyl-L-aspartate(89)-[ribosomal protein uS12]-hydrogen + (sulfur carrier)-H + 5'-deoxyadenosine + L-methionine + A + S-adenosyl-L-homocysteine + 2 H(+). In terms of biological role, catalyzes the methylthiolation of an aspartic acid residue of ribosomal protein uS12. This chain is Ribosomal protein uS12 methylthiotransferase RimO, found in Clostridium botulinum (strain Langeland / NCTC 10281 / Type F).